Here is a 300-residue protein sequence, read N- to C-terminus: Protein orai (300 aa).

Topologically, residues 1–128 (MPRSHDPSRV…SKAQLKASSR (128 aa)) are cytoplasmic. The disordered stretch occupies residues 58–82 (QPPSSGGGSRNVGGGDGAAGNSKNG). Over residues 62–75 (SGGGSRNVGGGDGA) the composition is skewed to gly residues. Residues 129 to 146 (TSALLAGFAMVCLVELQY) traverse the membrane as a helical segment. The Extracellular portion of the chain corresponds to 147–153 (DDSTSKP). A helical transmembrane segment spans residues 154–174 (LLIVLGVVTSLLVSVHLLALM). Over 175 to 205 (MSTCILPYMEATGCTQDSPHLKLKFYIDLSW) the chain is Cytoplasmic. The helical transmembrane segment at 206 to 226 (LFSTCIGLLLFLVEIGVIFYV) threads the bilayer. Over 227-237 (KFTAVGYPTAG) the chain is Extracellular. The helical transmembrane segment at 238-258 (YITTAMLIPVGIVFVLFSYLI) threads the bilayer. The Cytoplasmic segment spans residues 259–300 (HKNRVSHSLGRFKDKVDTMKQFLDVEANLQKSTIAPSTIRDI).

It belongs to the Orai family.

It is found in the membrane. In terms of biological role, ca(2+) release-activated Ca(2+)-like (CRAC-like) channel subunit which mediates Ca(2+) influx and increase in Ca(2+)-selective current by synergy with the Ca(2+) sensor, stim-1. Required for Ca(2+) and IP3-dependent contractile activity of sheath cells and the spermatheca. Affects brood size and somatic cell function. This chain is Protein orai (orai-1), found in Caenorhabditis briggsae.